The chain runs to 179 residues: MIKKEEVYKIGLFNKPHGIHGELQFTFTDDIFDRVDCDYLICLLDGIFVPFFIEEYRFRSDSTALVKLEGIDTAERARMFTNVEVYFPVKHAEEAEDGELSWNFFVGFRMEDVRHGELGEVVEVDTATVNTLFVVEQEDGEELLVPAQEEFIVEINQEKKLITVELPEGLLNLEDLEED.

The region spanning 97–170 (DGELSWNFFV…LITVELPEGL (74 aa)) is the PRC barrel domain.

The protein belongs to the RimM family. In terms of assembly, binds ribosomal protein uS19.

The protein localises to the cytoplasm. In terms of biological role, an accessory protein needed during the final step in the assembly of 30S ribosomal subunit, possibly for assembly of the head region. Essential for efficient processing of 16S rRNA. May be needed both before and after RbfA during the maturation of 16S rRNA. It has affinity for free ribosomal 30S subunits but not for 70S ribosomes. The chain is Ribosome maturation factor RimM from Bacteroides thetaiotaomicron (strain ATCC 29148 / DSM 2079 / JCM 5827 / CCUG 10774 / NCTC 10582 / VPI-5482 / E50).